The chain runs to 159 residues: Ribosomal RNA large subunit methyltransferase H (159 aa).

Residues Leu-76, Gly-108, and 127-132 (FSKMTF) contribute to the S-adenosyl-L-methionine site.

This sequence belongs to the RNA methyltransferase RlmH family. Homodimer.

It localises to the cytoplasm. It carries out the reaction pseudouridine(1915) in 23S rRNA + S-adenosyl-L-methionine = N(3)-methylpseudouridine(1915) in 23S rRNA + S-adenosyl-L-homocysteine + H(+). Its function is as follows. Specifically methylates the pseudouridine at position 1915 (m3Psi1915) in 23S rRNA. The protein is Ribosomal RNA large subunit methyltransferase H of Geobacillus thermodenitrificans (strain NG80-2).